Here is a 352-residue protein sequence, read N- to C-terminus: Maleylacetate reductase (352 aa).

Residues glycine 93–serine 94 and threonine 115–glycine 119 contribute to the NAD(+) site.

This sequence belongs to the iron-containing alcohol dehydrogenase family. It depends on The maleylacetate reductase family of enzymes does not require any metal ion for activity, despite being related to the family III metal-dependent polyol dehydrogenases. as a cofactor.

The catalysed reaction is 3-oxoadipate + NAD(+) = maleylacetate + NADH + H(+). The protein operates within xenobiotic degradation; gamma-hexachlorocyclohexane degradation. In terms of biological role, catalyzes the NADH-dependent reduction of maleylacetate to beta-ketoadipate, a step in the degradation of gamma-hexachlorocyclohexane (gamma-HCH or lindane). Has an essential role in this assimilation pathway that allows S.japonicum UT26 to grow on gamma-HCH as the sole source of carbon and energy. This is Maleylacetate reductase from Sphingobium indicum (strain DSM 16413 / CCM 7287 / MTCC 6362 / UT26 / NBRC 101211 / UT26S) (Sphingobium japonicum).